A 264-amino-acid polypeptide reads, in one-letter code: Phosphonoacetaldehyde hydrolase (264 aa).

D10 (nucleophile) is an active-site residue. Mg(2+) contacts are provided by D10 and A12. The active-site Schiff-base intermediate with substrate is the K52. D185 lines the Mg(2+) pocket.

This sequence belongs to the HAD-like hydrolase superfamily. PhnX family. As to quaternary structure, homodimer. It depends on Mg(2+) as a cofactor.

It catalyses the reaction phosphonoacetaldehyde + H2O = acetaldehyde + phosphate + H(+). Functionally, involved in phosphonate degradation. This is Phosphonoacetaldehyde hydrolase from Parabacteroides distasonis (strain ATCC 8503 / DSM 20701 / CIP 104284 / JCM 5825 / NCTC 11152).